A 553-amino-acid polypeptide reads, in one-letter code: Probable malate:quinone oxidoreductase (553 aa).

The interval 524 to 553 (PPPKIDLGAPSQATGNAPARPAKASADMAL) is disordered.

The protein belongs to the MQO family. It depends on FAD as a cofactor.

It catalyses the reaction (S)-malate + a quinone = a quinol + oxaloacetate. The protein operates within carbohydrate metabolism; tricarboxylic acid cycle; oxaloacetate from (S)-malate (quinone route): step 1/1. This is Probable malate:quinone oxidoreductase from Burkholderia cenocepacia (strain HI2424).